The primary structure comprises 231 residues: Quercetin 2,3-dioxygenase (231 aa).

The a divalent metal cation site is built by histidine 57, histidine 59, histidine 101, and glutamate 103.

The protein belongs to the pirin family. The cofactor is Zn(2+). Co(2+) is required as a cofactor. Fe(2+) serves as cofactor.

It catalyses the reaction quercetin + O2 = 2-(3,4-dihydroxybenzoyloxy)-4,6-dihydroxybenzoate + CO. It functions in the pathway flavonoid metabolism; quercetin degradation. Functionally, has quercetin 2,3-dioxygenase activity in vitro. Its physiological role is unknown; however, may provide a mechanism that would avoid inhibition of key cellular proteins, such as DNA gyrase, by quercetin. The polypeptide is Quercetin 2,3-dioxygenase (yhhW) (Escherichia coli O157:H7).